A 226-amino-acid polypeptide reads, in one-letter code: LexA repressor (226 aa).

Positions 42-62 form a DNA-binding region, H-T-H motif; it reads MREIGDAVGLASLSSVTHQLN. Active-site for autocatalytic cleavage activity residues include Ser-150 and Lys-187.

It belongs to the peptidase S24 family. Homodimer.

It carries out the reaction Hydrolysis of Ala-|-Gly bond in repressor LexA.. In terms of biological role, represses a number of genes involved in the response to DNA damage (SOS response), including recA and lexA. In the presence of single-stranded DNA, RecA interacts with LexA causing an autocatalytic cleavage which disrupts the DNA-binding part of LexA, leading to derepression of the SOS regulon and eventually DNA repair. The chain is LexA repressor from Clavibacter sepedonicus (Clavibacter michiganensis subsp. sepedonicus).